The chain runs to 291 residues: Omega-amidase NIT3 (291 aa).

One can recognise a CN hydrolase domain in the interval 11 to 264 (IKVALVQLSG…EEIIYAELDP (254 aa)). Phosphothreonine is present on threonine 34. The active-site Proton acceptor is glutamate 53. Lysine 128 functions as the Proton donor in the catalytic mechanism. Cysteine 169 functions as the Nucleophile in the catalytic mechanism.

Belongs to the carbon-nitrogen hydrolase superfamily. NIT1/NIT2 family. As to quaternary structure, homodimer.

The enzyme catalyses a monoamide of a dicarboxylate + H2O = a dicarboxylate + NH4(+). Its function is as follows. Possesses omega-amidase activity. The role of omega-amidase is to remove potentially toxic intermediates by converting 2-oxoglutaramate and 2-oxosuccinamate to biologically useful 2-oxoglutarate and oxaloacetate, respectively. In Saccharomyces cerevisiae (strain ATCC 204508 / S288c) (Baker's yeast), this protein is Omega-amidase NIT3 (NIT3).